The primary structure comprises 106 residues: COX assembly mitochondrial protein homolog (106 aa).

Alanine 2 is subject to N-acetylalanine. Residues 28–71 (RERCSEQVQDFTKCCKDSGVLMVVKCRKENSALKDCLTSYYKDP) form the CHCH domain. 2 short sequence motifs (cx9C motif) span residues 31 to 41 (CSEQVQDFTKC) and 53 to 63 (CRKENSALKDC). Disulfide bonds link cysteine 31–cysteine 63 and cysteine 41–cysteine 53.

The protein belongs to the CMC family. Component of the MITRAC (mitochondrial translation regulation assembly intermediate of cytochrome c oxidase complex) complex, the core components of this complex being COA3/MITRAC12 and COX14.

Its subcellular location is the mitochondrion. Its function is as follows. Component of the MITRAC (mitochondrial translation regulation assembly intermediate of cytochrome c oxidase complex) complex, that regulates cytochrome c oxidase assembly. The chain is COX assembly mitochondrial protein homolog (CMC1) from Bos taurus (Bovine).